A 312-amino-acid polypeptide reads, in one-letter code: Urease accessory protein UreD (312 aa).

A disordered region spans residues 1 to 50; sequence MRPLAPDARCAPSRPGRGPWYARRPVTTPSDPPAALREPPPPARRAGKAG.

This sequence belongs to the UreD family. UreD, UreF and UreG form a complex that acts as a GTP-hydrolysis-dependent molecular chaperone, activating the urease apoprotein by helping to assemble the nickel containing metallocenter of UreC. The UreE protein probably delivers the nickel.

It localises to the cytoplasm. Its function is as follows. Required for maturation of urease via the functional incorporation of the urease nickel metallocenter. This is Urease accessory protein UreD from Sorangium cellulosum (strain So ce56) (Polyangium cellulosum (strain So ce56)).